The chain runs to 267 residues: Hydroxyethylthiazole kinase (267 aa).

Substrate is bound at residue Met-46. Positions 122 and 168 each coordinate ATP. Residue Gly-195 participates in substrate binding.

This sequence belongs to the Thz kinase family. The cofactor is Mg(2+).

It catalyses the reaction 5-(2-hydroxyethyl)-4-methylthiazole + ATP = 4-methyl-5-(2-phosphooxyethyl)-thiazole + ADP + H(+). Its pathway is cofactor biosynthesis; thiamine diphosphate biosynthesis; 4-methyl-5-(2-phosphoethyl)-thiazole from 5-(2-hydroxyethyl)-4-methylthiazole: step 1/1. Catalyzes the phosphorylation of the hydroxyl group of 4-methyl-5-beta-hydroxyethylthiazole (THZ). The polypeptide is Hydroxyethylthiazole kinase (Nitratidesulfovibrio vulgaris (strain DP4) (Desulfovibrio vulgaris)).